A 262-amino-acid chain; its full sequence is GTP cyclohydrolase 1 type 2 homolog (262 aa).

A divalent metal cation contacts are provided by His64, His65, Asp103, His224, and Glu228.

It belongs to the GTP cyclohydrolase I type 2/NIF3 family. Homohexamer.

In Clostridium perfringens (strain 13 / Type A), this protein is GTP cyclohydrolase 1 type 2 homolog.